Reading from the N-terminus, the 182-residue chain is MHFVAVYILTHFHAYPGVAALPFFSTLPKITSCCDHYVVLNSLSSVSSSTPTCLDGEXLFQNAGQKFCRPFTDNRTIVYTMQDQVQRPWSVTWMDFNLVISDYGRAVIENLTESAMSAHKNGPRYLQMETFISDLFRYECHRDNRYVLEKKLQMFYPTTHMNELLFYPSDPTLPSPYGNGHY.

Positions 1-20 (MHFVAVYILTHFHAYPGVAA) are cleaved as a signal peptide. Residues N74 and N110 are each glycosylated (N-linked (GlcNAc...) asparagine; by host).

As to quaternary structure, interacts with isoform gQ2. The heterodimer gQ1-gQ2 associates with the glycoprotein complex gH-gL to form a tetrameric complex. The gH/gL/gQ1/gQ2 complex binds to host TNFRSF4. Post-translationally, glycosylated by host.

The protein resides in the virion membrane. The protein localises to the host endoplasmic reticulum-Golgi intermediate compartment. Functionally, plays a role in virus entry by participating in host receptor binding at the cell surface. The protein is Glycoprotein Q2 of Human herpesvirus 6B (strain Z29) (HHV-6 variant B).